The chain runs to 274 residues: tRNA-cytidine(32) 2-sulfurtransferase (274 aa).

Positions serine 40–serine 45 match the PP-loop motif motif. [4Fe-4S] cluster-binding residues include cysteine 115, cysteine 118, and cysteine 206.

Belongs to the TtcA family. Homodimer. The cofactor is Mg(2+). [4Fe-4S] cluster serves as cofactor.

It localises to the cytoplasm. It carries out the reaction cytidine(32) in tRNA + S-sulfanyl-L-cysteinyl-[cysteine desulfurase] + AH2 + ATP = 2-thiocytidine(32) in tRNA + L-cysteinyl-[cysteine desulfurase] + A + AMP + diphosphate + H(+). The protein operates within tRNA modification. Functionally, catalyzes the ATP-dependent 2-thiolation of cytidine in position 32 of tRNA, to form 2-thiocytidine (s(2)C32). The sulfur atoms are provided by the cysteine/cysteine desulfurase (IscS) system. The sequence is that of tRNA-cytidine(32) 2-sulfurtransferase from Pseudomonas putida (strain ATCC 47054 / DSM 6125 / CFBP 8728 / NCIMB 11950 / KT2440).